We begin with the raw amino-acid sequence, 1338 residues long: Fanconi anemia group I protein (1338 aa).

Lys-525 participates in a covalent cross-link: Glycyl lysine isopeptide (Lys-Gly) (interchain with G-Cter in ubiquitin). Residues Ser-558 and Ser-561 each carry the phosphoserine modification. The residue at position 567 (Thr-567) is a Phosphothreonine.

The protein belongs to the Fanconi anemia group I protein family. Homodimer. Part of a FANCI-FANCD2 heterodimeric complex that binds and scans dsDNA for DNA damage. Interacts with FANCL. Interacts with MTMR15/FAN1. Interacts with POLN. Interacts with UBL5; the interaction promotes FANCI homodimerization. In terms of processing, monoubiquitinated by FANCL during S phase and upon genotoxic stress. Deubiquitinated by USP1 as cells enter G2/M, or once DNA repair is completed. Monoubiquitination requires the FANCA-FANCB-FANCC-FANCE-FANCF-FANCG-FANCM complex. Ubiquitination is required for binding to chromatin, DNA repair, and normal cell cycle progression. Monoubiquitination is stimulated by DNA-binding. Post-translationally, phosphorylated in response to DNA damage by ATM and/or ATR. Phosphorylation of FANCI promotes ubiquitination of FANCD2, which prevents DNA release from the FANCI-FANCD2 complex.

Plays an essential role in the repair of DNA double-strand breaks by homologous recombination and in the repair of interstrand DNA cross-links (ICLs) by promoting FANCD2 monoubiquitination by FANCL and participating in recruitment to DNA repair sites. The FANCI-FANCD2 complex binds and scans double-stranded DNA (dsDNA) for DNA damage; this complex stalls at DNA junctions between double-stranded DNA and single-stranded DNA. Participates in S phase and G2 phase checkpoint activation upon DNA damage. The polypeptide is Fanconi anemia group I protein (Gallus gallus (Chicken)).